Reading from the N-terminus, the 391-residue chain is Pyruvate dehydrogenase E1 component subunit alpha, testis-specific form, mitochondrial (391 aa).

The transit peptide at 1–30 (MRKMLATVLSQVFSGMVQKPALRGLLSSLK) directs the protein to the mitochondrion. Residues histidine 93, tyrosine 119, arginine 120, alanine 158, glycine 166, valine 168, aspartate 197, glycine 198, alanine 199, asparagine 226, and tyrosine 228 each coordinate pyruvate. Residues tyrosine 119 and arginine 120 each coordinate thiamine diphosphate. Residues glycine 166, valine 168, aspartate 197, glycine 198, alanine 199, and asparagine 226 each contribute to the thiamine diphosphate site. Residue aspartate 197 participates in Mg(2+) binding. The Mg(2+) site is built by asparagine 226 and tyrosine 228. Histidine 293 provides a ligand contact to thiamine diphosphate. Phosphoserine is present on residues serine 294 and serine 296. Position 301 is a phosphoserine; by PDK3 (serine 301).

In terms of assembly, heterotetramer of two PDHA2 and two PDHB subunits. The heterotetramer interacts with DLAT, and is part of the multimeric pyruvate dehydrogenase complex that contains multiple copies of pyruvate dehydrogenase (E1), dihydrolipoamide acetyltransferase (DLAT, E2) and lipoamide dehydrogenase (DLD, E3). These subunits are bound to an inner core composed of about 48 DLAT and 12 PDHX molecules. Thiamine diphosphate is required as a cofactor. Requires Mg(2+) as cofactor. As to expression, testis.

The protein localises to the mitochondrion matrix. It carries out the reaction N(6)-[(R)-lipoyl]-L-lysyl-[protein] + pyruvate + H(+) = N(6)-[(R)-S(8)-acetyldihydrolipoyl]-L-lysyl-[protein] + CO2. With respect to regulation, pyruvate dehydrogenase activity is inhibited by phosphorylation of PDHA2; it is reactivated by dephosphorylation. Functionally, the pyruvate dehydrogenase complex catalyzes the overall conversion of pyruvate to acetyl-CoA and CO(2), and thereby links the glycolytic pathway to the tricarboxylic cycle. The polypeptide is Pyruvate dehydrogenase E1 component subunit alpha, testis-specific form, mitochondrial (Pdha2) (Rattus norvegicus (Rat)).